Consider the following 128-residue polypeptide: Flagellar assembly factor FliW 1 (128 aa).

This sequence belongs to the FliW family. As to quaternary structure, interacts with translational regulator CsrA and flagellin(s).

It is found in the cytoplasm. Functionally, acts as an anti-CsrA protein, binds CsrA and prevents it from repressing translation of its target genes, one of which is flagellin. Binds to flagellin and participates in the assembly of the flagellum. This is Flagellar assembly factor FliW 1 from Wolinella succinogenes (strain ATCC 29543 / DSM 1740 / CCUG 13145 / JCM 31913 / LMG 7466 / NCTC 11488 / FDC 602W) (Vibrio succinogenes).